The following is an 86-amino-acid chain: Kappa-theraphotoxin-Cg1a 6 (86 aa).

Positions 1-21 (MKVSVLITLAVLGVMFVWASA) are cleaved as a signal peptide. A propeptide spanning residues 22-50 (AELEERGSDQRDSPAWLKSMERIFQSEER) is cleaved from the precursor. 3 cysteine pairs are disulfide-bonded: C52-C66, C59-C71, and C65-C78. F84 is modified (phenylalanine amide).

The protein belongs to the neurotoxin 10 (Hwtx-1) family. 28 (Jztx-11) subfamily. In terms of tissue distribution, expressed by the venom gland.

It localises to the secreted. In terms of biological role, this toxin acts as a voltage-dependent gating-modifier. It inhibits the sodium conductance (IC(50)=124 nM) and slows the fast inactivation (EC(50)=1180 nM) of Nav1.5/SCN5A. It significantly shifts the activation to more depolarized voltages and decreases the deactivation of Nav1.5 currents upon extreme depolarization, but only slightly affects voltage-dependence of steady-state inactivation. In addition, this toxin causes an approximately five-fold decrease in the rate of recovery from inactivation and an approximately 1.9-fold reduction in the closed-state inactivation rate. This toxin integrates the functions of site 3 toxins (alpha-scorpion toxins) with site 4 toxins (beta-scorpion and spider toxins) by targeting multiple sites on Nav1.5. Also shows inhibition of voltage-gated potassium channels (5 uM completely inhibits Kv2.1/KCNB1, whereas 5 uM moderately inhibits Kv4.2/KCND2 Kv4.1/KCND1 channels). The chain is Kappa-theraphotoxin-Cg1a 6 from Chilobrachys guangxiensis (Chinese earth tiger tarantula).